The following is an 88-amino-acid chain: Apolipoprotein C-I (88 aa).

A signal peptide spans 1–26 (MRLFLSLPVLVVVLAMVLEGPAPTQA).

Belongs to the apolipoprotein C1 family.

The protein localises to the secreted. Inhibitor of lipoprotein binding to the low density lipoprotein (LDL) receptor, LDL receptor-related protein, and very low density lipoprotein (VLDL) receptor. Associates with high density lipoproteins (HDL) and the triacylglycerol-rich lipoproteins in the plasma and makes up about 10% of the protein of the VLDL and 2% of that of HDL. Appears to interfere directly with fatty acid uptake and is also the major plasma inhibitor of cholesteryl ester transfer protein (CETP). Binds free fatty acids and reduces their intracellular esterification. Modulates the interaction of APOE with beta-migrating VLDL and inhibits binding of beta-VLDL to the LDL receptor-related protein. This is Apolipoprotein C-I (APOC1) from Mirounga angustirostris (Northern elephant seal).